We begin with the raw amino-acid sequence, 347 residues long: Ornithine transcarbamylase, mitochondrial (347 aa).

A mitochondrion-targeting transit peptide spans 1 to 25 (MINSISNTVLLKSVVSKRFFSSSAK). Carbamoyl phosphate contacts are provided by residues 84–87 (STRT), Arg135, His162, and Gln165. L-ornithine-binding residues include Asn194, Asp258, Ser262, and Met263. The active-site Proton acceptor is Cys300. Residues 300–301 (CL) and Arg328 each bind carbamoyl phosphate.

This sequence belongs to the aspartate/ornithine carbamoyltransferase superfamily. OTCase family.

It is found in the mitochondrion matrix. The catalysed reaction is carbamoyl phosphate + L-ornithine = L-citrulline + phosphate + H(+). It functions in the pathway amino-acid biosynthesis; L-arginine biosynthesis; L-arginine from L-ornithine and carbamoyl phosphate: step 1/3. The protein is Ornithine transcarbamylase, mitochondrial (OTC) of Pachysolen tannophilus (Yeast).